Here is a 1034-residue protein sequence, read N- to C-terminus: Condensin complex subunit 3 (1034 aa).

7 HEAT repeats span residues 95 to 132 (SPVN…NLPE), 139 to 176 (DLFD…PSDP), 178 to 213 (CPVS…SLPK), 242 to 279 (LTIA…QYSE), 281 to 317 (DVLD…LVQN), 439 to 476 (TSLI…PIVT), and 618 to 655 (DFAR…LFGM). Polar residues predominate over residues 663–672 (TNPDDSQCKA). Residues 663-693 (TNPDDSQCKAQENADEDISEQEKPGSVDENL) form a disordered region. 3 HEAT repeats span residues 703-740 (ATVN…SGRL), 785-823 (CFAE…DLTR), and 878-915 (ENST…SGRE). Residues 909–949 (QLRSGREEHRVSKETEPQVSKETEDRTNLQENEEGKQKDEA) are compositionally biased toward basic and acidic residues. The disordered stretch occupies residues 909-1034 (QLRSGREEHR…LSKLLNEEAN (126 aa)). A compositionally biased stretch (basic residues) spans 964-984 (RGKATKGRRKGPAAAATRRKA). Positions 985–999 (SKAEEAEAEMERQEE) are enriched in basic and acidic residues.

Belongs to the CND3 (condensin subunit 3) family. As to quaternary structure, component of the condensin complex, which contains the XCAP-E/SMC2 and XCAP-C/SMC4 heterodimer, and three non SMC subunits that probably regulate the complex: XCAP-H/NCAPH, XCAP-D2/NCAPD2 and XCAP-G/NCAPG. In terms of processing, phosphorylated by cdk1. Its phosphorylation, as well as that of XCAP-D2 and XCAP-H subunits, activates the condensin complex and is required for chromosome condensation.

It localises to the nucleus. The protein resides in the cytoplasm. The protein localises to the chromosome. Its function is as follows. Regulatory subunit of the condensin complex, a complex required for conversion of interphase chromatin into mitotic-like condense chromosomes. The condensin complex probably introduces positive supercoils into relaxed DNA in the presence of type I topoisomerases and converts nicked DNA into positive knotted forms in the presence of type II topoisomerase. The polypeptide is Condensin complex subunit 3 (ncapg) (Xenopus laevis (African clawed frog)).